An 804-amino-acid chain; its full sequence is Probable replication endonuclease from prophage-like region (804 aa).

Active-site O-(5'-phospho-DNA)-tyrosine intermediate residues include Y498 and Y502.

It belongs to the phage GPA family.

Functionally, possible endonuclease which induces a single-strand cut and initiates DNA replication. This is Probable replication endonuclease from prophage-like region from Escherichia coli O6:H1 (strain CFT073 / ATCC 700928 / UPEC).